The following is a 103-amino-acid chain: Large ribosomal subunit protein uL24 (103 aa).

The protein belongs to the universal ribosomal protein uL24 family. Part of the 50S ribosomal subunit.

Its function is as follows. One of two assembly initiator proteins, it binds directly to the 5'-end of the 23S rRNA, where it nucleates assembly of the 50S subunit. In terms of biological role, one of the proteins that surrounds the polypeptide exit tunnel on the outside of the subunit. This is Large ribosomal subunit protein uL24 from Oceanobacillus iheyensis (strain DSM 14371 / CIP 107618 / JCM 11309 / KCTC 3954 / HTE831).